A 386-amino-acid polypeptide reads, in one-letter code: Succinyl-diaminopimelate desuccinylase (386 aa).

Residue H76 participates in Zn(2+) binding. D78 is an active-site residue. D110 serves as a coordination point for Zn(2+). E144 functions as the Proton acceptor in the catalytic mechanism. Positions 145, 173, and 359 each coordinate Zn(2+).

It belongs to the peptidase M20A family. DapE subfamily. Homodimer. Zn(2+) serves as cofactor. Co(2+) is required as a cofactor.

The enzyme catalyses N-succinyl-(2S,6S)-2,6-diaminopimelate + H2O = (2S,6S)-2,6-diaminopimelate + succinate. It functions in the pathway amino-acid biosynthesis; L-lysine biosynthesis via DAP pathway; LL-2,6-diaminopimelate from (S)-tetrahydrodipicolinate (succinylase route): step 3/3. Functionally, catalyzes the hydrolysis of N-succinyl-L,L-diaminopimelic acid (SDAP), forming succinate and LL-2,6-diaminopimelate (DAP), an intermediate involved in the bacterial biosynthesis of lysine and meso-diaminopimelic acid, an essential component of bacterial cell walls. The polypeptide is Succinyl-diaminopimelate desuccinylase (Chromohalobacter salexigens (strain ATCC BAA-138 / DSM 3043 / CIP 106854 / NCIMB 13768 / 1H11)).